Reading from the N-terminus, the 241-residue chain is B-cell receptor-associated protein 29 (241 aa).

Topologically, residues 1-6 (MTLQWA) are lumenal. A helical membrane pass occupies residues 7-27 (AVATFLYAEIGLILIFCLPFI). Residues 28 to 43 (PPQRWQKIFSFNVWGK) are Cytoplasmic-facing. Residues 44-64 (IATFWNKAFLTIIILLIVLFL) form a helical membrane-spanning segment. Residues 65 to 103 (DAVREVRKYSSVHTIEKSSTSRPDAYEHTQMKLFRSQRN) are Lumenal-facing. A helical membrane pass occupies residues 104-124 (LYISGFSLFFWLVLRRLVTLI). Residues 125–241 (TQLAKELSNK…RLERGNKKRL (117 aa)) lie on the Cytoplasmic side of the membrane. Positions 166–233 (GKDEECVLEA…KEHSELQDRL (68 aa)) form a coiled coil. A disordered region spans residues 198-223 (LSKAQNDVMEMKMQSERLSKEYDQLL). The segment covering 206-223 (MEMKMQSERLSKEYDQLL) has biased composition (basic and acidic residues). Residues 238–241 (KKRL) carry the Di-lysine motif motif.

This sequence belongs to the BCAP29/BCAP31 family. Homodimer. Heterodimer with BCAP31. Binds CASP8 (isoform 9) as a complex containing BCAP31, BCAP29, BCL2 and/or BCL2L1. Interacts with VAMP3, VAMP1 and membrane IgD immunoglobulins. May interact with ACTG1 and non-muscle myosin II.

The protein resides in the endoplasmic reticulum membrane. Functionally, may play a role in anterograde transport of membrane proteins from the endoplasmic reticulum to the Golgi. May be involved in CASP8-mediated apoptosis. The sequence is that of B-cell receptor-associated protein 29 (BCAP29) from Homo sapiens (Human).